The primary structure comprises 722 residues: Probable C-mannosyltransferase DPY19L4 (722 aa).

Residues M1 to P34 are disordered. A2 is modified (N-acetylalanine). Positions A25–P34 are enriched in basic and acidic residues. A run of 12 helical transmembrane segments spans residues I51–A71, V160–A177, W183–I201, F246–W262, V268–V284, Y291–L307, A313–C331, F351–V369, L420–F440, I465–L485, F487–W507, and P521–W541.

This sequence belongs to the dpy-19 family.

It localises to the membrane. In terms of biological role, probable C-mannosyltransferase that mediates C-mannosylation of tryptophan residues on target proteins. This is Probable C-mannosyltransferase DPY19L4 (Dpy19l4) from Mus musculus (Mouse).